The primary structure comprises 400 residues: NADH dehydrogenase-like protein MT1860 (400 aa).

The protein belongs to the NADH dehydrogenase family. It depends on FAD as a cofactor.

This chain is NADH dehydrogenase-like protein MT1860, found in Mycobacterium tuberculosis (strain CDC 1551 / Oshkosh).